The following is an 899-amino-acid chain: Valine--tRNA ligase (899 aa).

The 'HIGH' region signature appears at 60 to 70; the sequence is PNVTGVLHMGH. Residues 539–543 carry the 'KMSKS' region motif; that stretch reads KMSKS. Residue lysine 542 participates in ATP binding. Residues 827-898 adopt a coiled-coil conformation; sequence AGLIDLDEEQ…KQGLEKLAAL (72 aa).

Belongs to the class-I aminoacyl-tRNA synthetase family. ValS type 1 subfamily. Monomer.

The protein localises to the cytoplasm. The catalysed reaction is tRNA(Val) + L-valine + ATP = L-valyl-tRNA(Val) + AMP + diphosphate. Catalyzes the attachment of valine to tRNA(Val). As ValRS can inadvertently accommodate and process structurally similar amino acids such as threonine, to avoid such errors, it has a 'posttransfer' editing activity that hydrolyzes mischarged Thr-tRNA(Val) in a tRNA-dependent manner. This is Valine--tRNA ligase from Syntrophotalea carbinolica (strain DSM 2380 / NBRC 103641 / GraBd1) (Pelobacter carbinolicus).